The primary structure comprises 293 residues: ATP synthase subunit a (293 aa).

The next 8 membrane-spanning stretches (helical) occupy residues 39-59, 73-93, 102-122, 128-148, 172-192, 198-218, 224-244, and 245-265; these read QVFG…VYWI, FVLL…DLIG, YFLM…LGGI, SLTF…IMGI, TLIP…SISL, ILGG…AFST, LALS…HVYF, and DVVV…NYWA.

It belongs to the ATPase A chain family. As to quaternary structure, F-type ATPases have 2 components, CF(1) - the catalytic core - and CF(0) - the membrane proton channel. CF(1) has five subunits: alpha(3), beta(3), gamma(1), delta(1), epsilon(1). CF(0) has three main subunits: a(1), b(2) and c(9-12). The alpha and beta chains form an alternating ring which encloses part of the gamma chain. CF(1) is attached to CF(0) by a central stalk formed by the gamma and epsilon chains, while a peripheral stalk is formed by the delta and b chains.

The protein resides in the cell membrane. Key component of the proton channel; it plays a direct role in the translocation of protons across the membrane. The sequence is that of ATP synthase subunit a from Mycoplasma pneumoniae (strain ATCC 29342 / M129 / Subtype 1) (Mycoplasmoides pneumoniae).